Consider the following 505-residue polypeptide: Outer capsid protein VP5 (505 aa).

Residues 1 to 42 (MGKFTSFLKRAGNATKRALTSDSAKKMYKLAGKTLQRVVESE) are involved in membrane permeabilization.

The protein belongs to the orbivirus VP5 family.

Its subcellular location is the virion. VP5 protein is one of the two proteins (with VP2) which constitute the virus particle outer capsid. Acts as a membrane permeabilization protein that mediates release of viral particles from endosomal compartments into the cytoplasm. Permeabilization activity is probably negatively regulated by VP2 and is triggered by endosomal degradation of VP2 and exposure to low pH. The protein is Outer capsid protein VP5 (Segment-6) of African horse sickness virus (AHSV).